The sequence spans 352 residues: MTNTPSSAPSPLTYRDAGVDIDAGNALVERIKPLVKRSFRPEVMGGLGGFGALFDLSNKYREPVLVSGTDGVGTKLKLAHQLNRHDTIGIDLVAMCVNDVLVQGAEPLFFLDYFATGKLDIDTAAAVVGGIANGCTEAGCALIGGETAEMPDMYAPGEYDLAGFTVAAVEKSELKDGASVAAGDVLIGIASSGPHSNGYSLVRRIYDRAGRPADLELEGGVKLVDALMAPTRLYVKPILSLLKSHGEAIHGMAHITGGGLTENIIRVVPDGLGLDIQASSWTLPPVFQWLQKEGAVADSEMWRTFNCGIGFVLIVAADQVAAVSDAVKAQGLEHWTIGQVVTAEGAERVHIG.

The protein belongs to the AIR synthase family.

It is found in the cytoplasm. The catalysed reaction is 2-formamido-N(1)-(5-O-phospho-beta-D-ribosyl)acetamidine + ATP = 5-amino-1-(5-phospho-beta-D-ribosyl)imidazole + ADP + phosphate + H(+). Its pathway is purine metabolism; IMP biosynthesis via de novo pathway; 5-amino-1-(5-phospho-D-ribosyl)imidazole from N(2)-formyl-N(1)-(5-phospho-D-ribosyl)glycinamide: step 2/2. The protein is Phosphoribosylformylglycinamidine cyclo-ligase of Stenotrophomonas maltophilia (strain K279a).